The primary structure comprises 746 residues: Alpha-galactosidase 2 (746 aa).

Residues 1–26 form the signal peptide; that stretch reads MLGAPSPRRLADVLAVTAGLVASVRA. N-linked (GlcNAc...) asparagine glycosylation is found at Asn-43, Asn-156, Asn-180, Asn-188, Asn-360, Asn-427, Asn-446, and Asn-495. Asp-504 serves as the catalytic Nucleophile. Asp-566 serves as the catalytic Proton donor. A glycan (N-linked (GlcNAc...) asparagine) is linked at Asn-714.

This sequence belongs to the glycosyl hydrolase 27 family.

It is found in the secreted. It carries out the reaction Hydrolysis of terminal, non-reducing alpha-D-galactose residues in alpha-D-galactosides, including galactose oligosaccharides, galactomannans and galactolipids.. Functionally, alpha-galactosidase involved in the degradation of simple oligosaccharides like melibiose, raffinose and stachyose, and of polymeric galacto(gluco)mannans. This chain is Alpha-galactosidase 2 (agl2), found in Hypocrea jecorina (Trichoderma reesei).